The primary structure comprises 212 residues: Large ribosomal subunit protein uL3 (212 aa).

Gln153 carries the N5-methylglutamine modification.

It belongs to the universal ribosomal protein uL3 family. As to quaternary structure, part of the 50S ribosomal subunit. Forms a cluster with proteins L14 and L19. In terms of processing, methylated by PrmB.

One of the primary rRNA binding proteins, it binds directly near the 3'-end of the 23S rRNA, where it nucleates assembly of the 50S subunit. The sequence is that of Large ribosomal subunit protein uL3 from Shewanella halifaxensis (strain HAW-EB4).